The following is a 284-amino-acid chain: 4-diphosphocytidyl-2-C-methyl-D-erythritol kinase (284 aa).

Lysine 14 is an active-site residue. Position 98 to 108 (98 to 108 (PMGGGLGGGSS)) interacts with ATP. Aspartate 140 is a catalytic residue.

Belongs to the GHMP kinase family. IspE subfamily.

The enzyme catalyses 4-CDP-2-C-methyl-D-erythritol + ATP = 4-CDP-2-C-methyl-D-erythritol 2-phosphate + ADP + H(+). It participates in isoprenoid biosynthesis; isopentenyl diphosphate biosynthesis via DXP pathway; isopentenyl diphosphate from 1-deoxy-D-xylulose 5-phosphate: step 3/6. Catalyzes the phosphorylation of the position 2 hydroxy group of 4-diphosphocytidyl-2C-methyl-D-erythritol. In Shewanella baltica (strain OS223), this protein is 4-diphosphocytidyl-2-C-methyl-D-erythritol kinase.